The following is a 551-amino-acid chain: Cysteine desulfurase SufS (551 aa).

Residues 1–22 form the signal peptide; sequence MRPSSAAWICLLLRIANYTCYS. At K327 the chain carries N6-(pyridoxal phosphate)lysine. Catalysis depends on C500, which acts as the Cysteine persulfide intermediate.

Belongs to the class-V pyridoxal-phosphate-dependent aminotransferase family. Csd subfamily. As to quaternary structure, monomer. Interacts with SufE; interaction enhances cysteine desulfurase activity of SufS. It depends on pyridoxal 5'-phosphate as a cofactor.

Its subcellular location is the plastid. The protein localises to the apicoplast. The enzyme catalyses (sulfur carrier)-H + L-cysteine = (sulfur carrier)-SH + L-alanine. Its pathway is cofactor biosynthesis; iron-sulfur cluster biosynthesis. Its function is as follows. Catalyzes sulfur activation and mobilization in sulfur mobilization (SUF) pathway for iron-sulfur (Fe-S) cluster biogenesis. Active when in complex with a partner protein SufE. Required for apicoplast maintenance. Plays a role in the development of sporozoites in oocysts in mosquitoes. The chain is Cysteine desulfurase SufS from Plasmodium vivax.